Reading from the N-terminus, the 157-residue chain is RxLR effector protein PITG_04049 (157 aa).

A signal peptide spans 1-23; the sequence is MRLIAGVLAGFLVICEVTSTSES. The short motif at 51–65 is the RxLR-dEER element; the sequence is QFLRTDVVMNRGEER.

Belongs to the RxLR effector family.

It localises to the secreted. It is found in the host cytoplasm. The protein resides in the host nucleus. Functionally, effector that might be involved in host plant infection. In Phytophthora infestans (strain T30-4) (Potato late blight agent), this protein is RxLR effector protein PITG_04049.